A 175-amino-acid chain; its full sequence is ATP synthase subunit delta (175 aa).

This sequence belongs to the ATPase delta chain family. As to quaternary structure, F-type ATPases have 2 components, F(1) - the catalytic core - and F(0) - the membrane proton channel. F(1) has five subunits: alpha(3), beta(3), gamma(1), delta(1), epsilon(1). F(0) has three main subunits: a(1), b(2) and c(10-14). The alpha and beta chains form an alternating ring which encloses part of the gamma chain. F(1) is attached to F(0) by a central stalk formed by the gamma and epsilon chains, while a peripheral stalk is formed by the delta and b chains.

The protein localises to the cell inner membrane. In terms of biological role, f(1)F(0) ATP synthase produces ATP from ADP in the presence of a proton or sodium gradient. F-type ATPases consist of two structural domains, F(1) containing the extramembraneous catalytic core and F(0) containing the membrane proton channel, linked together by a central stalk and a peripheral stalk. During catalysis, ATP synthesis in the catalytic domain of F(1) is coupled via a rotary mechanism of the central stalk subunits to proton translocation. This protein is part of the stalk that links CF(0) to CF(1). It either transmits conformational changes from CF(0) to CF(1) or is implicated in proton conduction. In Xanthomonas euvesicatoria pv. vesicatoria (strain 85-10) (Xanthomonas campestris pv. vesicatoria), this protein is ATP synthase subunit delta.